Here is a 963-residue protein sequence, read N- to C-terminus: Bifunctional glutamine synthetase adenylyltransferase/adenylyl-removing enzyme (963 aa).

Positions 1-451 are adenylyl removase; it reads MAAPSELQLY…EHFADIIAER (451 aa). Residues 461 to 963 are adenylyl transferase; it reads TIEWKALWAG…VAFWEKVFAE (503 aa).

It belongs to the GlnE family. Mg(2+) serves as cofactor.

The catalysed reaction is [glutamine synthetase]-O(4)-(5'-adenylyl)-L-tyrosine + phosphate = [glutamine synthetase]-L-tyrosine + ADP. The enzyme catalyses [glutamine synthetase]-L-tyrosine + ATP = [glutamine synthetase]-O(4)-(5'-adenylyl)-L-tyrosine + diphosphate. Involved in the regulation of glutamine synthetase GlnA, a key enzyme in the process to assimilate ammonia. When cellular nitrogen levels are high, the C-terminal adenylyl transferase (AT) inactivates GlnA by covalent transfer of an adenylyl group from ATP to specific tyrosine residue of GlnA, thus reducing its activity. Conversely, when nitrogen levels are low, the N-terminal adenylyl removase (AR) activates GlnA by removing the adenylyl group by phosphorolysis, increasing its activity. The regulatory region of GlnE binds the signal transduction protein PII (GlnB) which indicates the nitrogen status of the cell. The sequence is that of Bifunctional glutamine synthetase adenylyltransferase/adenylyl-removing enzyme from Hahella chejuensis (strain KCTC 2396).